A 913-amino-acid polypeptide reads, in one-letter code: Calcium-activated chloride channel regulator 1 (913 aa).

Positions 1–21 are cleaved as a signal peptide; the sequence is MGSFKSSVFILVLHLLEGALS. The tract at residues 46–199 is metalloprotease domain; sequence DETLIQQIKD…DIAGKNVVNH (154 aa). Position 156 (His156) interacts with Zn(2+). Glu157 is a catalytic residue. His160 and Asn167 together coordinate Zn(2+). The VWFA domain maps to 306–475; sequence IVCLVLDKSG…NGLIDAFGAL (170 aa). Asn503, Asn514, Asn770, Asn804, Asn810, Asn836, and Asn885 each carry an N-linked (GlcNAc...) asparagine glycan.

Belongs to the CLCR family. In terms of processing, glycosylated. Post-translationally, the translation product is autoproteolytically cleaved by the metalloprotease domain in the endoplasmic reticulum into a N-terminal and a C-terminal products that remain physically associated with each other. The cleavage is necessary for calcium-activated chloride channel (CaCC) activation activity. In terms of tissue distribution, expressed in mucin-producing cells in the respiratory and intestinal tracts, cutaneous sweat glands, and renal mucous glands (at protein level). Strong overexpression in the airways of horses with recurrent airway obstruction (at protein level).

It is found in the secreted. The protein localises to the extracellular space. Functionally, may be involved in mediating calcium-activated chloride conductance. May play critical roles in goblet cell metaplasia, mucus hypersecretion, cystic fibrosis and AHR. May be involved in the regulation of mucus production and/or secretion by goblet cells. Involved in the regulation of tissue inflammation in the innate immune response. May play a role as a tumor suppressor. Induces MUC5AC. The polypeptide is Calcium-activated chloride channel regulator 1 (CLCA1) (Equus caballus (Horse)).